We begin with the raw amino-acid sequence, 101 residues long: Large ribosomal subunit protein uL23 (101 aa).

Belongs to the universal ribosomal protein uL23 family. As to quaternary structure, part of the 50S ribosomal subunit. Contacts protein L29, and trigger factor when it is bound to the ribosome.

One of the early assembly proteins it binds 23S rRNA. One of the proteins that surrounds the polypeptide exit tunnel on the outside of the ribosome. Forms the main docking site for trigger factor binding to the ribosome. This is Large ribosomal subunit protein uL23 from Corynebacterium diphtheriae (strain ATCC 700971 / NCTC 13129 / Biotype gravis).